A 516-amino-acid polypeptide reads, in one-letter code: Melianol synthase CYP71BQ17 (516 aa).

A helical transmembrane segment spans residues 14–34 (MPHLPSLPVSLSFLLFFLMLV). Cysteine 454 serves as a coordination point for heme.

It belongs to the cytochrome P450 family. Heme serves as cofactor. In terms of tissue distribution, mainly expressed in roots and, to a lesser extent, in stems and old leaves.

It localises to the membrane. The enzyme catalyses dihydroniloticin + 2 reduced [NADPH--hemoprotein reductase] + 2 O2 = melianol + 2 oxidized [NADPH--hemoprotein reductase] + 3 H2O + 2 H(+). Its pathway is secondary metabolite biosynthesis; terpenoid biosynthesis. Its function is as follows. Monooxygenase involved in the biosynthesis of quassinoids triterpene natural products such as ailanthone, chaparrinone, glaucarubinone and amarolide, allelopathic degraded triterpene lactones inhibiting the growth of other plants, and possessing antimalarial, antifeedant, insecticidal, anti-inflammatory and anticancer activities. Catalyzes the conversion of dihydroniloticin to the protolimonoid melianol. The protein is Melianol synthase CYP71BQ17 of Ailanthus altissima (Tree-of-heaven).